Here is a 154-residue protein sequence, read N- to C-terminus: MHPAHLLVLLAVCVSLLGAARIPPLPLSLLNFANLIECANHGTRSALAYADYGCYCGKGGRGTPLDDLDRCCHVHDDCYGEAEKLPACNYLMSSPYFNSYSYKCNEGKVTCTDDNDECKAFICNCDRTAAICFAGATYNDENFMISKKRNDICQ.

Positions 1-27 are cleaved as a signal peptide; that stretch reads MHPAHLLVLLAVCVSLLGAARIPPLPL. Intrachain disulfides connect Cys38–Cys104, Cys54–Cys153, Cys56–Cys72, Cys71–Cys132, Cys78–Cys125, Cys88–Cys118, and Cys111–Cys123. Residues Gly57 and Gly59 each contribute to the Ca(2+) site. His75 is a catalytic residue. Residue Asp76 coordinates Ca(2+). Asp126 is an active-site residue.

This sequence belongs to the phospholipase A2 family. Group I subfamily. D49 sub-subfamily. In terms of assembly, monomer. The cofactor is Ca(2+). Expressed by the venom gland.

The protein resides in the secreted. The catalysed reaction is a 1,2-diacyl-sn-glycero-3-phosphocholine + H2O = a 1-acyl-sn-glycero-3-phosphocholine + a fatty acid + H(+). Functionally, snake venom phospholipase A2 (PLA2) that has a low specific activity on phospholipid substrates, and is neither neurotoxic, nor myotoxic. Induces endothelial cell migration which is mediated, at least in part, by its hydrolytic products. Shows antimalarial activity, but is not able to potently inhibit HIV-1 replication. Binds in a calcium-independent fashion with very high affinity to a muscle-type (M-type) PLA2 receptor, but is a very poor ligand for neuronal-type (N-type) receptors. PLA2 catalyzes the calcium-dependent hydrolysis of the 2-acyl groups in 3-sn-phosphoglycerides. The protein is Phospholipase A2 OS1 of Oxyuranus scutellatus scutellatus (Australian taipan).